A 32-amino-acid chain; its full sequence is Beta-amanitin proprotein (32 aa).

Positions 1–10 (MSDINATRLP) are excised as a propeptide. Positions 11-18 (IWGIGCDP) form a cross-link, cyclopeptide (Ile-Pro). A cross-link (2'-cysteinyl-6'-hydroxytryptophan sulfoxide (Trp-Cys)) is located at residues 12 to 16 (WGIGC). A propeptide spanning residues 19–32 (CIGDDVTILLTRGE) is cleaved from the precursor.

The protein belongs to the MSDIN fungal toxin family. In terms of processing, processed by the macrocyclase-peptidase enzyme POPB to yield a toxic cyclic decapeptide. POPB first removes 10 residues from the N-terminus. Conformational trapping of the remaining peptide forces the enzyme to release this intermediate rather than proceed to macrocyclization. The enzyme rebinds the remaining peptide in a different conformation and catalyzes macrocyclization of the N-terminal 8 residues.

Its function is as follows. Toxin belonging to the bicyclic octapeptides amatoxins that acts by binding non-competitively to RNA polymerase II and greatly slowing the elongation of transcripts from target promoters. The sequence is that of Beta-amanitin proprotein from Amanita phalloides (Death cap).